The following is a 178-amino-acid chain: Anthranilate synthase component 2 (178 aa).

The Glutamine amidotransferase type-1 domain occupies 1–178; that stretch reads MIVVVDCKDS…RNFVEMCHDG (178 aa). 49–51 is a binding site for L-glutamine; sequence GPG. C71 acts as the Nucleophile; for GATase activity in catalysis. Residues Q75 and 120-121 contribute to the L-glutamine site; that span reads SL. Active-site for GATase activity residues include H155 and E157.

Heterotetramer consisting of two non-identical subunits: a beta subunit (TrpG) and a large alpha subunit (TrpE).

The enzyme catalyses chorismate + L-glutamine = anthranilate + pyruvate + L-glutamate + H(+). Its pathway is amino-acid biosynthesis; L-tryptophan biosynthesis; L-tryptophan from chorismate: step 1/5. Part of a heterotetrameric complex that catalyzes the two-step biosynthesis of anthranilate, an intermediate in the biosynthesis of L-tryptophan. In the first step, the glutamine-binding beta subunit (TrpG) of anthranilate synthase (AS) provides the glutamine amidotransferase activity which generates ammonia as a substrate that, along with chorismate, is used in the second step, catalyzed by the large alpha subunit of AS (TrpE) to produce anthranilate. In the absence of TrpG, TrpE can synthesize anthranilate directly from chorismate and high concentrations of ammonia. The polypeptide is Anthranilate synthase component 2 (trpG) (Archaeoglobus fulgidus (strain ATCC 49558 / DSM 4304 / JCM 9628 / NBRC 100126 / VC-16)).